A 411-amino-acid polypeptide reads, in one-letter code: Meiotically up-regulated gene 147 protein (411 aa).

3 disordered regions span residues 1-52 (MLAQ…FENK), 102-137 (EREE…ELAD), and 156-191 (HQHE…HYES). Over residues 33 to 43 (TQNESNLQQSE) the composition is skewed to polar residues. Residues 156-172 (HQHEDEFSSSNKDKGFT) are compositionally biased toward basic and acidic residues.

The protein localises to the cytoplasm. Its subcellular location is the nucleus. Its function is as follows. Has a role in meiosis. The polypeptide is Meiotically up-regulated gene 147 protein (mug147) (Schizosaccharomyces pombe (strain 972 / ATCC 24843) (Fission yeast)).